The chain runs to 388 residues: Succinyl-diaminopimelate desuccinylase (388 aa).

Histidine 71 serves as a coordination point for Zn(2+). Aspartate 73 is an active-site residue. Residue aspartate 104 participates in Zn(2+) binding. Glutamate 143 (proton acceptor) is an active-site residue. The Zn(2+) site is built by glutamate 144, glutamate 172, and histidine 361.

This sequence belongs to the peptidase M20A family. DapE subfamily. In terms of assembly, homodimer. The cofactor is Zn(2+). Requires Co(2+) as cofactor.

The enzyme catalyses N-succinyl-(2S,6S)-2,6-diaminopimelate + H2O = (2S,6S)-2,6-diaminopimelate + succinate. Its pathway is amino-acid biosynthesis; L-lysine biosynthesis via DAP pathway; LL-2,6-diaminopimelate from (S)-tetrahydrodipicolinate (succinylase route): step 3/3. Catalyzes the hydrolysis of N-succinyl-L,L-diaminopimelic acid (SDAP), forming succinate and LL-2,6-diaminopimelate (DAP), an intermediate involved in the bacterial biosynthesis of lysine and meso-diaminopimelic acid, an essential component of bacterial cell walls. The polypeptide is Succinyl-diaminopimelate desuccinylase (Bradyrhizobium diazoefficiens (strain JCM 10833 / BCRC 13528 / IAM 13628 / NBRC 14792 / USDA 110)).